The primary structure comprises 346 residues: Cyclin-dependent kinase 7 (346 aa).

Ala-2 bears the N-acetylalanine mark. The residue at position 7 (Ser-7) is a Phosphoserine. Residues 12-295 form the Protein kinase domain; sequence YEKLDFLGEG…ASQALKTKYF (284 aa). Residues 18 to 26 and Lys-41 each bind ATP; that span reads LGEGQFATV. Catalysis depends on Asp-137, which acts as the Proton acceptor. At Ser-164 the chain carries Phosphoserine; by CDK1 and CDK2. A Phosphothreonine; by CDK2 modification is found at Thr-170.

This sequence belongs to the protein kinase superfamily. CMGC Ser/Thr protein kinase family. CDC2/CDKX subfamily. As to quaternary structure, associates primarily with cyclin-H (CCNH) and MAT1 to form the CAK complex. CAK can further associate with the core-TFIIH to form the TFIIH basal transcription factor; this complex is sensitive to UV light. The CAK complex binds to p53/TP53 in response to DNA damage. Interacts with CDK2, SF1/NR5A1, PUF60 and PRKCI. Interacts with HINT1. In terms of processing, phosphorylation of Ser-164 during mitosis inactivates the enzyme. Phosphorylation of Thr-170 is required for activity. Phosphorylated at Ser-164 and Thr-170 by CDK2.

It is found in the nucleus. The protein resides in the cytoplasm. The protein localises to the perinuclear region. It carries out the reaction L-seryl-[protein] + ATP = O-phospho-L-seryl-[protein] + ADP + H(+). The catalysed reaction is L-threonyl-[protein] + ATP = O-phospho-L-threonyl-[protein] + ADP + H(+). It catalyses the reaction [DNA-directed RNA polymerase] + ATP = phospho-[DNA-directed RNA polymerase] + ADP + H(+). Its activity is regulated as follows. Phosphorylation at Thr-170 is required for enzymatic activity. The association of p53/TP53 to the CAK complex in response to DNA damage reduces kinase activity toward CDK2 and RNA polymerase II repetitive C-terminal domain (CTD), thus stopping cell cycle progression. In terms of biological role, serine/threonine kinase involved in cell cycle control and in RNA polymerase II-mediated RNA transcription. Cyclin-dependent kinases (CDKs) are activated by the binding to a cyclin and mediate the progression through the cell cycle. Each different complex controls a specific transition between 2 subsequent phases in the cell cycle. Required for both activation and complex formation of CDK1/cyclin-B during G2-M transition, and for activation of CDK2/cyclins during G1-S transition (but not complex formation). CDK7 is the catalytic subunit of the CDK-activating kinase (CAK) complex. Phosphorylates SPT5/SUPT5H, SF1/NR5A1, POLR2A, p53/TP53, CDK1, CDK2, CDK4, CDK6 and CDK11B/CDK11. Initiates transcription by RNA polymerase II by mediating phosphorylation of POLR2A at 'Ser-5' of the repetitive C-terminal domain (CTD) when POLR2A is in complex with DNA, promoting dissociation from DNA and initiation. CAK activates the cyclin-associated kinases CDK1, CDK2, CDK4 and CDK6 by threonine phosphorylation, thus regulating cell cycle progression. CAK complexed to the core-TFIIH basal transcription factor activates RNA polymerase II by serine phosphorylation of the CTD of POLR2A, allowing its escape from the promoter and elongation of the transcripts. Its expression and activity are constant throughout the cell cycle. Upon DNA damage, triggers p53/TP53 activation by phosphorylation, but is inactivated in turn by p53/TP53; this feedback loop may lead to an arrest of the cell cycle and of the transcription, helping in cell recovery, or to apoptosis. Required for DNA-bound peptides-mediated transcription and cellular growth inhibition. The protein is Cyclin-dependent kinase 7 (Cdk7) of Mus musculus (Mouse).